We begin with the raw amino-acid sequence, 388 residues long: Probable RNA-binding protein sce3 (388 aa).

The tract at residues 18–84 (ESFGSTNWAD…GGMGSGYQRD (67 aa)) is disordered. A compositionally biased stretch (polar residues) spans 38–50 (DRTTSTYRATPSS). Ser-49, Ser-50, and Ser-60 each carry phosphoserine. Thr-61 carries the phosphothreonine modification. Phosphoserine is present on residues Ser-64, Ser-67, and Ser-71. Residues 94–169 (FTAHVGNLSF…RPVRITVAEP (76 aa)) form the RRM domain. Positions 171–185 (RSFAREERSTGDWVR) are enriched in basic and acidic residues. The tract at residues 171–388 (RSFAREERST…WTKIGKGRKH (218 aa)) is disordered. Ser-197 is modified (phosphoserine). Residues 208 to 229 (RFRDPARDPSDRVREEPREWVR) are compositionally biased toward basic and acidic residues. Residues 248-257 (PRSSSNVNTE) are compositionally biased toward polar residues. Residues Ser-250, Ser-251, and Ser-252 each carry the phosphoserine modification. Residues 258–268 (ATPSATTTTSS) show a composition bias toward low complexity. Basic and acidic residues predominate over residues 289-349 (RVEEKLAKRT…LGDGEKKSSE (61 aa)). The residue at position 347 (Ser-347) is a Phosphoserine.

It is found in the cytoplasm. The protein is Probable RNA-binding protein sce3 (sce3) of Schizosaccharomyces pombe (strain 972 / ATCC 24843) (Fission yeast).